We begin with the raw amino-acid sequence, 876 residues long: Alanine--tRNA ligase (876 aa).

Lys74 carries the post-translational modification N6-acetyllysine. Zn(2+)-binding residues include His564, His568, Cys666, and His670.

Belongs to the class-II aminoacyl-tRNA synthetase family. Homotetramer. The cofactor is Zn(2+).

The protein localises to the cytoplasm. The catalysed reaction is tRNA(Ala) + L-alanine + ATP = L-alanyl-tRNA(Ala) + AMP + diphosphate. Its function is as follows. Catalyzes the attachment of alanine to tRNA(Ala) in a two-step reaction: alanine is first activated by ATP to form Ala-AMP and then transferred to the acceptor end of tRNA(Ala). Also edits incorrectly charged Ser-tRNA(Ala) and Gly-tRNA(Ala) via its editing domain. In Shigella sonnei (strain Ss046), this protein is Alanine--tRNA ligase.